A 360-amino-acid polypeptide reads, in one-letter code: UDP-3-O-acylglucosamine N-acyltransferase (360 aa).

The Proton acceptor role is filled by histidine 253.

This sequence belongs to the transferase hexapeptide repeat family. LpxD subfamily. Homotrimer.

The enzyme catalyses a UDP-3-O-[(3R)-3-hydroxyacyl]-alpha-D-glucosamine + a (3R)-hydroxyacyl-[ACP] = a UDP-2-N,3-O-bis[(3R)-3-hydroxyacyl]-alpha-D-glucosamine + holo-[ACP] + H(+). It functions in the pathway bacterial outer membrane biogenesis; LPS lipid A biosynthesis. In terms of biological role, catalyzes the N-acylation of UDP-3-O-acylglucosamine using 3-hydroxyacyl-ACP as the acyl donor. Is involved in the biosynthesis of lipid A, a phosphorylated glycolipid that anchors the lipopolysaccharide to the outer membrane of the cell. The polypeptide is UDP-3-O-acylglucosamine N-acyltransferase (Burkholderia multivorans (strain ATCC 17616 / 249)).